A 514-amino-acid chain; its full sequence is MNAPDLTRPPLTIRRISLDTGRENVAVISRRSRALRPEVFRGFSRVELRINSKVLLATLMITDDDAMIGPDEVGLSEPAFRRFNEPVGSAVSVTPARSPASLDAVRAKIQGHTLSAAEITAIVDDLAHFRYSDMEIAAFLISAARFTTTDELLALVGAMASVGTKLTWDTPIVVDKHCIGGIPGNRTTMIVVPIVAAHGLMIPKTSSRAITSPAGTADTMELLARVDLDVEQMKQVVHACGGCLVWGGHVNLSPADDILISVERPLSLDTPEQMVASIMSKKLAAGSTRLLIDFPVGPSAKVTNANEAMRLRKLFEFVGDHFGISVEVVTTDGRQPIGRGIGPVLEARDVMAVLGNEPGAPADLREKSLRLAAHLLEYDPKLRGGTGYARAKELLDSGAALKKMQQIIDAQGPSPCPAELGSYAADVLAAADGVVNGIDCLRINRLARSAGAPVAKGAGIDLFKKIGDRVEKGEPLYRVYASDRSEFDLALAAAQAESGFAINHHTPADVDLVS.

It belongs to the thymidine/pyrimidine-nucleoside phosphorylase family. Type 2 subfamily.

It catalyses the reaction thymidine + phosphate = 2-deoxy-alpha-D-ribose 1-phosphate + thymine. The polypeptide is Putative thymidine phosphorylase (Rhodopseudomonas palustris (strain ATCC BAA-98 / CGA009)).